We begin with the raw amino-acid sequence, 1548 residues long: Dicer-like protein 1 (1548 aa).

Positions 1 to 41 are enriched in basic and acidic residues; the sequence is MGDPAAHEMADLERGFSSEDDAEYRSGDDEASKFVENEPSK. Positions 1–48 are disordered; sequence MGDPAAHEMADLERGFSSEDDAEYRSGDDEASKFVENEPSKRGKISQK. The Helicase ATP-binding domain occupies 106 to 289; that stretch reads LFERAKQQNT…QAAIELEGLL (184 aa). 119–126 is a binding site for ATP; sequence LDTGSGKT. Residues 232–235 carry the DEAH box motif; the sequence is DEAH. The Helicase C-terminal domain maps to 428 to 589; sequence TLSKLLEEYF…FCNTQPEDRL (162 aa). Positions 624-718 constitute a Dicer dsRNA-binding fold domain; sequence SLPILQAFLN…RSKFVEKRHV (95 aa). The PAZ domain occupies 871-1006; it reads PLLRHVADRD…FVLEPMRISP (136 aa). RNase III domains are found at residues 1051-1197 and 1248-1411; these read LTKD…MTTR and AQKI…VDSK. Positions 1288, 1397, and 1400 each coordinate Mg(2+). The DRBM domain occupies 1445–1518; sequence TFFTQYVFET…ARKALDKLRS (74 aa). Positions 1457, 1489, 1530, and 1532 each coordinate Zn(2+).

It belongs to the helicase family. Dicer subfamily. Mg(2+) serves as cofactor. It depends on Mn(2+) as a cofactor.

Its function is as follows. Dicer-like endonuclease involved in cleaving double-stranded RNA in the RNA interference (RNAi) pathway. Produces 21 to 25 bp dsRNAs (siRNAs) which target the selective destruction of homologous RNAs leading to sequence-specific suppression of gene expression, called post-transcriptional gene silencing (PTGS). Part of a broad host defense response against viral infection and transposons. The protein is Dicer-like protein 1 (DCL-1) of Cryphonectria parasitica (Chestnut blight fungus).